A 510-amino-acid polypeptide reads, in one-letter code: Pyruvate kinase, cytosolic isozyme (510 aa).

Arg-50 contacts substrate. 4 residues coordinate K(+): Asn-52, Ser-54, Asp-84, and Thr-85. 52–55 (NFSH) contributes to the ATP binding site. Residues Arg-91 and Lys-176 each coordinate ATP. Residue Glu-242 participates in Mg(2+) binding. Substrate-binding residues include Gly-265, Asp-266, and Thr-298. Residue Asp-266 participates in Mg(2+) binding.

Belongs to the pyruvate kinase family. As to quaternary structure, homotetramer. Requires Mg(2+) as cofactor. The cofactor is K(+).

It is found in the cytoplasm. It carries out the reaction pyruvate + ATP = phosphoenolpyruvate + ADP + H(+). The protein operates within carbohydrate degradation; glycolysis; pyruvate from D-glyceraldehyde 3-phosphate: step 5/5. This Solanum tuberosum (Potato) protein is Pyruvate kinase, cytosolic isozyme.